A 129-amino-acid chain; its full sequence is Small ribosomal subunit protein uS9 (129 aa).

It belongs to the universal ribosomal protein uS9 family.

This is Small ribosomal subunit protein uS9 from Helicobacter acinonychis (strain Sheeba).